The chain runs to 424 residues: Tyrosine--tRNA ligase (424 aa).

Position 37 (tyrosine 37) interacts with L-tyrosine. Positions 42-51 match the 'HIGH' region motif; sequence ITADSLHVGH. L-tyrosine is bound by residues tyrosine 175 and glutamine 179. Positions 235–239 match the 'KMSKS' region motif; that stretch reads KFGKT. An ATP-binding site is contributed by lysine 238. Residues 356–414 form the S4 RNA-binding domain; it reads GNLQQLLVYSRLALSRSHAKSMIVSNSVRINNIIQNNPFYILCNRDKMYHKYTLLSRGK.

This sequence belongs to the class-I aminoacyl-tRNA synthetase family. TyrS type 1 subfamily. In terms of assembly, homodimer.

The protein resides in the cytoplasm. It catalyses the reaction tRNA(Tyr) + L-tyrosine + ATP = L-tyrosyl-tRNA(Tyr) + AMP + diphosphate + H(+). In terms of biological role, catalyzes the attachment of tyrosine to tRNA(Tyr) in a two-step reaction: tyrosine is first activated by ATP to form Tyr-AMP and then transferred to the acceptor end of tRNA(Tyr). This chain is Tyrosine--tRNA ligase, found in Buchnera aphidicola subsp. Baizongia pistaciae (strain Bp).